Here is a 481-residue protein sequence, read N- to C-terminus: Glutamate--tRNA ligase (481 aa).

The 'HIGH' region motif lies at 11–21; it reads PSPTGLLHIGN. The 'KMSKS' region signature appears at 255-259; that stretch reads KLSKR. Residue Lys-258 participates in ATP binding.

It belongs to the class-I aminoacyl-tRNA synthetase family. Glutamate--tRNA ligase type 1 subfamily. In terms of assembly, monomer.

The protein resides in the cytoplasm. The catalysed reaction is tRNA(Glu) + L-glutamate + ATP = L-glutamyl-tRNA(Glu) + AMP + diphosphate. Catalyzes the attachment of glutamate to tRNA(Glu) in a two-step reaction: glutamate is first activated by ATP to form Glu-AMP and then transferred to the acceptor end of tRNA(Glu). This chain is Glutamate--tRNA ligase, found in Streptococcus pyogenes serotype M6 (strain ATCC BAA-946 / MGAS10394).